Consider the following 357-residue polypeptide: NADH-quinone oxidoreductase subunit H (357 aa).

8 consecutive transmembrane segments (helical) span residues 25 to 45, 94 to 114, 130 to 150, 166 to 186, 201 to 221, 254 to 274, 294 to 314, and 329 to 349; these read ILII…VVAY, IYLF…VWVV, LLYV…AGWA, LLVS…MIAG, IIYW…ISAL, FFLA…VMFF, VPGI…YLWV, and LSWK…ALMT.

This sequence belongs to the complex I subunit 1 family. As to quaternary structure, NDH-1 is composed of 14 different subunits. Subunits NuoA, H, J, K, L, M, N constitute the membrane sector of the complex.

It is found in the cell inner membrane. It catalyses the reaction a quinone + NADH + 5 H(+)(in) = a quinol + NAD(+) + 4 H(+)(out). In terms of biological role, NDH-1 shuttles electrons from NADH, via FMN and iron-sulfur (Fe-S) centers, to quinones in the respiratory chain. The immediate electron acceptor for the enzyme in this species is believed to be ubiquinone. Couples the redox reaction to proton translocation (for every two electrons transferred, four hydrogen ions are translocated across the cytoplasmic membrane), and thus conserves the redox energy in a proton gradient. This subunit may bind ubiquinone. The polypeptide is NADH-quinone oxidoreductase subunit H (Ruthia magnifica subsp. Calyptogena magnifica).